The chain runs to 621 residues: Putative zinc metalloprotease CPn_0344/CP_0416/CPj0344/CpB0350 (621 aa).

Zn(2+) is bound at residue His20. The active site involves Glu21. Position 24 (His24) interacts with Zn(2+). Transmembrane regions (helical) follow at residues 103–125, 561–583, and 596–613; these read ILVL…SILY, VLNL…WEIV, and ILVP…FLTF.

This sequence belongs to the peptidase M50B family. Requires Zn(2+) as cofactor.

The protein resides in the cell inner membrane. The protein is Putative zinc metalloprotease CPn_0344/CP_0416/CPj0344/CpB0350 of Chlamydia pneumoniae (Chlamydophila pneumoniae).